Here is a 464-residue protein sequence, read N- to C-terminus: Probable glycosyltransferase Saci_1499 (464 aa).

Transmembrane regions (helical) follow at residues 6–26 (IFLN…QIIL), 300–320 (LIIY…STLL), 337–357 (ALLF…SLAL), 373–393 (LTAF…KGLL), 416–436 (IIAI…LYIY), and 439–459 (YYVT…TMLL).

Belongs to the glycosyltransferase 2 family.

It localises to the cell membrane. Its function is as follows. Probably part of a 4-gene DNA damage response locus in which the upstream ups system, in combination with this downstream locus, functions in homologous recombination to rescue Sulfolobales from DNA-damaging threats. The sequence is that of Probable glycosyltransferase Saci_1499 from Sulfolobus acidocaldarius (strain ATCC 33909 / DSM 639 / JCM 8929 / NBRC 15157 / NCIMB 11770).